The primary structure comprises 458 residues: Glutamyl-tRNA(Gln) amidotransferase subunit D (458 aa).

The region spanning proline 97–asparagine 434 is the Asparaginase/glutaminase domain. Residues threonine 107, threonine 185, aspartate 186, and lysine 264 contribute to the active site.

This sequence belongs to the asparaginase 1 family. GatD subfamily. In terms of assembly, heterodimer of GatD and GatE.

It carries out the reaction L-glutamyl-tRNA(Gln) + L-glutamine + ATP + H2O = L-glutaminyl-tRNA(Gln) + L-glutamate + ADP + phosphate + H(+). Allows the formation of correctly charged Gln-tRNA(Gln) through the transamidation of misacylated Glu-tRNA(Gln) in organisms which lack glutaminyl-tRNA synthetase. The reaction takes place in the presence of glutamine and ATP through an activated gamma-phospho-Glu-tRNA(Gln). The GatDE system is specific for glutamate and does not act on aspartate. The polypeptide is Glutamyl-tRNA(Gln) amidotransferase subunit D (Methanopyrus kandleri (strain AV19 / DSM 6324 / JCM 9639 / NBRC 100938)).